Consider the following 475-residue polypeptide: Gelsolin-like protein 1 (475 aa).

The interval 1-131 (MGGTSLDPAL…GYRHVDDQFK (131 aa)) is actin binding, actin severing, Ca-sensitive. The segment at 1 to 239 (MGGTSLDPAL…VRKVSKGKDD (239 aa)) is necessary for barbed end capping activity. One copy of the Gelsolin-like 1 repeat lies at 27-105 (FVLEPVPEVD…IQNYESPLFL (79 aa)). Residues 70 to 73 (DEIG) form an actin-actin interfilament contact point region. The interval 106-147 (SYFPDGIRYVSGGYESGYRHVDDQFKNWKPHLFHCKGKRNVR) is required for synapse elimination during development. The required for phosphatidylinositol 4,5-bisphosphate binding and regulation stretch occupies residues 133–227 (WKPHLFHCKG…STFWSYFGGV (95 aa)). Gelsolin-like repeat units follow at residues 148–208 (CTEV…KVHI), 275–341 (RKEQ…STQF), and 375–447 (EIAN…PPTF). The segment at 240-475 (DDNYWKRLTE…VQNMRRLLFH (236 aa)) is F- and G-actin binding, Ca-independent. Residues 248–348 (TEQITLWKVS…TQFTQWFRDW (101 aa)) form an inhibitory for phosphatidylinositol 4,5-bisphosphate binding activity region.

This sequence belongs to the villin/gelsolin family. As to quaternary structure, monomer. Binds to actin monomers and filaments. In terms of processing, cleavage by caspase ced-3 activates its actin-severing function and is required for the elimination of presynaptic components during development.

It is found in the cytoplasm. The protein localises to the cytoskeleton. Its function is as follows. Calcium-regulated, actin-modulating protein that binds to the plus (or barbed) ends of actin monomers or filaments, preventing monomer exchange (end-blocking or capping). Binds actin but does not nucleate actin polymerization, albeit slows down elongation by blocking the barbed ends. By promoting actin depolymerization, required for the elimination of presynaptic components downstream of the egl-1, ced-4 and ced-3 apoptotic pathway during larval development. This is Gelsolin-like protein 1 from Caenorhabditis elegans.